The chain runs to 527 residues: Probable bifunctional tRNA threonylcarbamoyladenosine biosynthesis protein (527 aa).

A kae1 region spans residues 1-323 (MPDIMPDDGL…YRADEVEVAW (323 aa)). Fe cation contacts are provided by His-110, His-114, and Tyr-131. L-threonylcarbamoyladenylate contacts are provided by residues 131–135 (YASGA), Asp-163, Gly-176, Glu-180, and Asn-256. Asp-284 contacts Fe cation. The Protein kinase domain occupies 333-527 (IGPHEGGVAR…HEVELRGRYL (195 aa)). Residues 340 to 348 (VARGAEAVV) and Lys-357 contribute to the ATP site. Residue Asp-444 is the Proton acceptor; for kinase activity of the active site.

This sequence in the N-terminal section; belongs to the KAE1 / TsaD family. It in the C-terminal section; belongs to the protein kinase superfamily. Tyr protein kinase family. BUD32 subfamily. As to quaternary structure, component of the KEOPS complex that consists of Kae1, Bud32, Cgi121 and Pcc1; the whole complex dimerizes. Fe(2+) is required as a cofactor.

Its subcellular location is the cytoplasm. It catalyses the reaction L-seryl-[protein] + ATP = O-phospho-L-seryl-[protein] + ADP + H(+). The catalysed reaction is L-threonyl-[protein] + ATP = O-phospho-L-threonyl-[protein] + ADP + H(+). It carries out the reaction L-threonylcarbamoyladenylate + adenosine(37) in tRNA = N(6)-L-threonylcarbamoyladenosine(37) in tRNA + AMP + H(+). Functionally, required for the formation of a threonylcarbamoyl group on adenosine at position 37 (t(6)A37) in tRNAs that read codons beginning with adenine. Is a component of the KEOPS complex that is probably involved in the transfer of the threonylcarbamoyl moiety of threonylcarbamoyl-AMP (TC-AMP) to the N6 group of A37. The Kae1 domain likely plays a direct catalytic role in this reaction. The Bud32 domain probably displays kinase activity that regulates Kae1 function. This is Probable bifunctional tRNA threonylcarbamoyladenosine biosynthesis protein from Methanoculleus marisnigri (strain ATCC 35101 / DSM 1498 / JR1).